A 541-amino-acid chain; its full sequence is RING finger protein 37 (541 aa).

The 81-residue stretch at 258–338 (DVPEEFLDPI…DHFLLQHSIP (81 aa)) folds into the U-box domain. Arg-451 carries the post-translational modification Asymmetric dimethylarginine. Residues 483 to 528 (CASCKRVFSPYFKKEPVYQLPCGHLLCRPCLGEKQRSLPMTCTACQ) form an RING-type zinc finger.

In terms of assembly, interacts with UBE2L3. Interacts with VCP. In terms of tissue distribution, expressed in liver, heart, brain, kidney and testis.

It localises to the nucleus. It carries out the reaction S-ubiquitinyl-[E2 ubiquitin-conjugating enzyme]-L-cysteine + [acceptor protein]-L-lysine = [E2 ubiquitin-conjugating enzyme]-L-cysteine + N(6)-ubiquitinyl-[acceptor protein]-L-lysine.. It participates in protein modification; protein ubiquitination. May have a ubiquitin-protein ligase activity acting as an E3 ubiquitin-protein ligase or as a ubiquitin-ubiquitin ligase promoting elongation of ubiquitin chains on substrates. This is RING finger protein 37 from Homo sapiens (Human).